We begin with the raw amino-acid sequence, 221 residues long: Bcl-2-related ovarian killer protein homolog A (221 aa).

The BH4 signature appears at 32-44 (KVLCRDYIHSRLH). The short motif at 64 to 80 (VSSVLLWLGDELEYLRP) is the BH3 element. Residues 110-140 (EIFSTEYSRKGLEKHKGVTWGKIVSLYAVAG) carry the BH1 motif. The BH2 signature appears at 173-187 (WLKKRGGWADITKCV). Residues 198 to 218 (WLVTAACACGHYLKAVVFYLL) form a helical membrane-spanning segment.

The protein belongs to the Bcl-2 family. Strongest expression in ovary and eye, weaker expression in gut, kidney and brain. Little expression in liver or heart.

It localises to the membrane. Its function is as follows. May play a role in apoptosis. Does not appear to show pro-apoptotic activity when expressed ectopically in early embryos. The chain is Bcl-2-related ovarian killer protein homolog A from Danio rerio (Zebrafish).